We begin with the raw amino-acid sequence, 354 residues long: Arginase-2, mitochondrial (354 aa).

The transit peptide at 1 to 22 directs the protein to the mitochondrion; the sequence is MSLRSHLSRLLRTQVHSVRKKS. The Mn(2+) site is built by His120, Asp143, His145, and Asp147. Residues 145 to 149, 156 to 158, and Asp202 each bind substrate; these read HADIN and SGN. Mn(2+) is bound by residues Asp251 and Asp253. Residues Thr265 and Glu296 each contribute to the substrate site. Residues 332-354 are disordered; that stretch reads IVYDQLPTPSSPDESESEERVRI.

Belongs to the arginase family. In terms of assembly, homotrimer. Requires Mn(2+) as cofactor.

It is found in the mitochondrion. It carries out the reaction L-arginine + H2O = urea + L-ornithine. Its pathway is nitrogen metabolism; urea cycle; L-ornithine and urea from L-arginine: step 1/1. May play a role in the regulation of extra-urea cycle arginine metabolism and also in down-regulation of nitric oxide synthesis. Extrahepatic arginase functions to regulate L-arginine bioavailability to nitric oxid synthase (NOS). Arginine metabolism is a critical regulator of innate and adaptive immune responses. Seems to be involved in negative regulation of the survival capacity of activated T cells. May suppress inflammation-related signaling in asthmatic airway epithelium. May play a role in promoting prenatal immune suppression. Regulates RPS6KB1 signaling, which promotes endothelial cell senescence and inflammation and implicates NOS3/eNOS dysfunction. Can inhibit endothelial autophagy independently of its enzymatic activity implicating mTORC2 signaling. Involved in vascular smooth muscle cell senescence and apoptosis independently of its enzymatic activity. This Bos taurus (Bovine) protein is Arginase-2, mitochondrial (ARG2).